Reading from the N-terminus, the 345-residue chain is MNYDDDCLYEDKHMDTDIYDMLADEDTSDVDNTLAVCATARAGIEKAGFSVLETFTPGAEGFTFACIENKTRENVVIKAGQRGGTVTEAHILRNINHPVIIRLMGTFTYNSFTCLVLPRYKTDLYCYLSDRRRIAICDMLSIERSVLRAIQYLHENRIIHRDVKAENIFINHPGDVCLGDFGAACYPVDITQNKYYGWAGTIATNAPELLARDPYGPAVDIWSAGIVLFEMATCHDSLFEKDGLDGDCDSDRQIKLIIRRTGVHPSEFPIDAQATLDEIYRTCQKTSRKPGTRPTWTNLYELPLELEYLICKMLAFDAHKRPSAKALLDFAAFYDIPDPYPNPTN.

In terms of domain architecture, Protein kinase spans 49 to 334 (FSVLETFTPG…KALLDFAAFY (286 aa)). Residues 55-63 (FTPGAEGFT) and lysine 78 each bind ATP. Catalysis depends on aspartate 162, which acts as the Proton acceptor.

It belongs to the protein kinase superfamily. Ser/Thr protein kinase family. Post-translationally, phosphorylated by UL13 homolog; this phosphorylation regulates subsequent phosphorylation of UL31 and UL34 homologs by US3. Autophosphorylated.

It localises to the host cytoplasm. It is found in the host nucleus. It carries out the reaction L-seryl-[protein] + ATP = O-phospho-L-seryl-[protein] + ADP + H(+). It catalyses the reaction L-threonyl-[protein] + ATP = O-phospho-L-threonyl-[protein] + ADP + H(+). Multifunctional serine/threonine kinase that plays a role in several processes including egress of virus particles from the nucleus, modulation of the actin cytoskeleton and inhibition of apoptosis. Phosphorylates UL31 and UL34 homologs, two critical regulators of capsid budding from nucleus to endoplasmic reticulum, thereby facilitating virion egress. Modulates and redistributes host components of the nuclear envelope, including LMNA, emerin/EMD and the nuclear matrix protein MATR3. Phosphorylates envelope glycoprotein B (gB), probably to direct it to the cell surface. Promotes virus intracellular spread by restructuring host cell cytoskeleton. Blocks host apoptosis to extend cell survival and allow efficient viral replication. Promotes viral gene expression by phosphorylating host HDAC2 to reduce viral genome silencing. In Chlorocebus aethiops (Green monkey), this protein is Serine/threonine-protein kinase US3 homolog (US2).